The sequence spans 362 residues: Solute carrier family 25 member 3 (362 aa).

The transit peptide at 1–49 (MYSSVVHLARANPFNAPHLQLVHDGLAGPRSDPAGPPGPPRRSRNLAAA) directs the protein to the mitochondrion. The Mitochondrial intermembrane portion of the chain corresponds to 50-63 (AVEEQYSCDYGSGR). Solcar repeat units lie at residues 63–147 (RFFI…FKVL), 160–244 (WRTS…TVEA), and 261–339 (EQLV…VKVY). Residues 64–86 (FFILCGLGGIISCGTTHTALVPL) form a helical membrane-spanning segment. At 87 to 121 (DLVKCRMQVDPQKYKSIFNGFSVTLKEDGFRGLAK) the chain is on the mitochondrial matrix side. N6-acetyllysine is present on Lys-99. At Lys-112 the chain carries N6-methyllysine. Residues 122-141 (GWAPTFIGYSLQGLCKFGFY) traverse the membrane as a helical segment. The Mitochondrial intermembrane segment spans residues 142–161 (EVFKVLYSNMLGEENAYLWR). The helical transmembrane segment at 162 to 183 (TSLYLAASASAEFFADIALAPM) threads the bilayer. Over 184-218 (EAAKVRIQTQPGYANTLRDAAPKMYKEEGLKAFYK) the chain is Mitochondrial matrix. Position 196 is a phosphotyrosine (Tyr-196). An N6-acetyllysine modification is found at Lys-209. The helical transmembrane segment at 219-238 (GVAPLWMRQIPYTMMKFACF) threads the bilayer. Topologically, residues 239 to 261 (ERTVEALYKFVVPKPRSECSKPE) are mitochondrial intermembrane. A helical transmembrane segment spans residues 262–284 (QLVVTFVAGYIAGVFCAIVSHPA). The Mitochondrial matrix segment spans residues 285 to 314 (DSVVSVLNKEKGSSASEVLKRLGFRGVWKG). The helical transmembrane segment at 315–333 (LFARIIMIGTLTALQWFIY) threads the bilayer. Residues 334–362 (DSVKVYFRLPRPPPPEMPESLKKKLGYTQ) are Mitochondrial intermembrane-facing.

This sequence belongs to the mitochondrial carrier (TC 2.A.29) family. Interacts with PPIF; the interaction is impaired by CsA. Expressed in heart, diaphragm and skeletal muscle (at protein level). Not detected in liver, lung, brain, and kidney (at protein level). In terms of tissue distribution, ubiquitous (at protein level).

It localises to the mitochondrion inner membrane. The enzyme catalyses phosphate(in) + H(+)(in) = phosphate(out) + H(+)(out). Up-regulated in the presence of cardiolipin. Inorganic ion transporter that transports phosphate or copper ions across the mitochondrial inner membrane into the matrix compartment. Mediates proton-coupled symport of phosphate ions necessary for mitochondrial oxidative phosphorylation of ADP to ATP. Transports copper ions probably in the form of anionic copper(I) complexes to maintain mitochondrial matrix copper pool and to supply copper for cytochrome C oxidase complex assembly. May also play a role in regulation of the mitochondrial permeability transition pore (mPTP). This Bos taurus (Bovine) protein is Solute carrier family 25 member 3.